Here is a 130-residue protein sequence, read N- to C-terminus: uncharacterized protein (130 aa).

A signal peptide spans 1 to 26 (MINNFKGILIIILSFLFLLLFKYSNA). Residue Asn58 is glycosylated (N-linked (GlcNAc...) asparagine).

The protein belongs to the Dictyostelium gerABC family.

The protein resides in the secreted. This is an uncharacterized protein from Dictyostelium discoideum (Social amoeba).